We begin with the raw amino-acid sequence, 842 residues long: Netrin receptor UNC5A (842 aa).

Residues 1 to 25 form the signal peptide; the sequence is MAVRPGLWPALLGIVLAAWLRGSGA. Residues 26–306 lie on the Extracellular side of the membrane; it reads QQSATVANPV…ASGPEDVALY (281 aa). The Ig-like domain occupies 44-141; the sequence is PHFLVEPEDV…SGTTKSQKAY (98 aa). Intrachain disulfides connect C65-C126, C77-C124, and C170-C221. Residues N107 and N218 are each glycosylated (N-linked (GlcNAc...) asparagine). The Ig-like C2-type domain maps to 155–234; the sequence is PLAKEVSLEQ…NIVARRRSAS (80 aa). In terms of domain architecture, TSP type-1 spans 242–294; the sequence is DGSWSPWSKWSACGLDCTHWRSRECSDPAPRNGGEECQGTDLDTRNCTSDLCV. C-linked (Man) tryptophan glycans are attached at residues W245, W248, and W251. 3 disulfides stabilise this stretch: C254-C288, C258-C293, and C266-C278. The N-linked (GlcNAc...) asparagine glycan is linked to N287. Residues 307-327 traverse the membrane as a helical segment; the sequence is VGLIAVAVCLVLLLLVLILVY. Residues 328–842 are Cytoplasmic-facing; that stretch reads CRKKEGLDSD…GLFTVSEAEC (515 aa). The ZU5 domain occupies 441 to 584; sequence NMTYGTFNFL…LGRFALVGEA (144 aa). The tract at residues 605 to 623 is interaction with DCC; it reads SLEYNIRVYCLHDTHDALK. Positions 761 to 841 constitute a Death domain; the sequence is QKIISSLDPP…AGLFTVSEAE (81 aa).

It belongs to the unc-5 family. In terms of assembly, homodimer and homooligomer. Interacts with the cytoplasmic part of DCC. Interacts with MAGED1. Interacts with PRKCABP, possibly mediating some interaction with PKC. Interacts (via extracellular domain) with FLRT2 (via extracellular domain). Interacts (via extracellular domain) with FLRT3 (via extracellular domain). Post-translationally, phosphorylated on cytoplasmic tyrosine residues. Phosphorylated by PKC in vitro. Proteolytically cleaved by caspases during apoptosis. The cleavage does not take place when the receptor is associated with netrin ligand. Its cleavage by caspases is required to induce apoptosis. In terms of processing, the two extracellular TSRs of UNC5A contain WxxWxxWxxC motifs that can be C-mannosylated on all tryptophans. DPY19L1 preferentially mannosylates the first two tryptophans and DPY19L3 prefers the third. C-mannosylation by DPY19L1 is required for transport of UNC5A from the endoplasmic reticulum to the cell surface.

The protein localises to the cell membrane. The protein resides in the membrane raft. It is found in the cell projection. It localises to the neuron projection. Functionally, receptor for netrin required for axon guidance. Functions in the netrin signaling pathway and promotes neurite outgrowth in response to NTN1. Mediates axon repulsion of neuronal growth cones in the developing nervous system in response to netrin. Axon repulsion in growth cones may be mediated by its association with DCC that may trigger signaling for repulsion. It also acts as a dependence receptor required for apoptosis induction when not associated with netrin ligand. This is Netrin receptor UNC5A (UNC5A) from Homo sapiens (Human).